The following is a 176-amino-acid chain: Adenine phosphoribosyltransferase (176 aa).

The protein belongs to the purine/pyrimidine phosphoribosyltransferase family. As to quaternary structure, homodimer.

Its subcellular location is the cytoplasm. The enzyme catalyses AMP + diphosphate = 5-phospho-alpha-D-ribose 1-diphosphate + adenine. Its pathway is purine metabolism; AMP biosynthesis via salvage pathway; AMP from adenine: step 1/1. Catalyzes a salvage reaction resulting in the formation of AMP, that is energically less costly than de novo synthesis. This chain is Adenine phosphoribosyltransferase, found in Roseobacter denitrificans (strain ATCC 33942 / OCh 114) (Erythrobacter sp. (strain OCh 114)).